A 318-amino-acid chain; its full sequence is Methionyl-tRNA formyltransferase (318 aa).

110-113 contacts (6S)-5,6,7,8-tetrahydrofolate; sequence SLLP.

This sequence belongs to the Fmt family.

The catalysed reaction is L-methionyl-tRNA(fMet) + (6R)-10-formyltetrahydrofolate = N-formyl-L-methionyl-tRNA(fMet) + (6S)-5,6,7,8-tetrahydrofolate + H(+). Its function is as follows. Attaches a formyl group to the free amino group of methionyl-tRNA(fMet). The formyl group appears to play a dual role in the initiator identity of N-formylmethionyl-tRNA by promoting its recognition by IF2 and preventing the misappropriation of this tRNA by the elongation apparatus. This chain is Methionyl-tRNA formyltransferase, found in Geobacillus sp. (strain WCH70).